The primary structure comprises 239 residues: Pyridoxine 5'-phosphate synthase (239 aa).

Asparagine 7 lines the 3-amino-2-oxopropyl phosphate pocket. Aspartate 9–histidine 10 serves as a coordination point for 1-deoxy-D-xylulose 5-phosphate. Arginine 18 provides a ligand contact to 3-amino-2-oxopropyl phosphate. Histidine 43 acts as the Proton acceptor in catalysis. Residues arginine 45 and histidine 50 each contribute to the 1-deoxy-D-xylulose 5-phosphate site. Catalysis depends on glutamate 70, which acts as the Proton acceptor. Threonine 100 serves as a coordination point for 1-deoxy-D-xylulose 5-phosphate. Histidine 191 functions as the Proton donor in the catalytic mechanism. 3-amino-2-oxopropyl phosphate is bound by residues glycine 192 and glycine 213–histidine 214.

This sequence belongs to the PNP synthase family. Homooctamer; tetramer of dimers.

Its subcellular location is the cytoplasm. The catalysed reaction is 3-amino-2-oxopropyl phosphate + 1-deoxy-D-xylulose 5-phosphate = pyridoxine 5'-phosphate + phosphate + 2 H2O + H(+). It functions in the pathway cofactor biosynthesis; pyridoxine 5'-phosphate biosynthesis; pyridoxine 5'-phosphate from D-erythrose 4-phosphate: step 5/5. Catalyzes the complicated ring closure reaction between the two acyclic compounds 1-deoxy-D-xylulose-5-phosphate (DXP) and 3-amino-2-oxopropyl phosphate (1-amino-acetone-3-phosphate or AAP) to form pyridoxine 5'-phosphate (PNP) and inorganic phosphate. This is Pyridoxine 5'-phosphate synthase from Desulforapulum autotrophicum (strain ATCC 43914 / DSM 3382 / VKM B-1955 / HRM2) (Desulfobacterium autotrophicum).